A 428-amino-acid polypeptide reads, in one-letter code: Trigger factor (428 aa).

One can recognise a PPIase FKBP-type domain in the interval 166 to 250 (GDIVTFDFKG…IKNIKEKILP (85 aa)).

It belongs to the FKBP-type PPIase family. Tig subfamily.

The protein resides in the cytoplasm. The enzyme catalyses [protein]-peptidylproline (omega=180) = [protein]-peptidylproline (omega=0). Functionally, involved in protein export. Acts as a chaperone by maintaining the newly synthesized protein in an open conformation. Functions as a peptidyl-prolyl cis-trans isomerase. The polypeptide is Trigger factor (Mycoplasma mycoides subsp. mycoides SC (strain CCUG 32753 / NCTC 10114 / PG1)).